We begin with the raw amino-acid sequence, 396 residues long: Protein GTS1 (396 aa).

In terms of domain architecture, Arf-GAP spans 14–141 (DRELKELINS…FRYDEIKPED (128 aa)). A C4-type zinc finger spans residues 30–53 (CGECGNFYPTWCSVNLGVFLCGRC). Positions 148–161 (DFDGESDRFDERNR) are enriched in basic and acidic residues. Disordered stretches follow at residues 148 to 194 (DFDG…SGSR) and 233 to 266 (KSSS…QPAI). Ser153 carries the post-translational modification Phosphoserine. Tyr181 bears the Phosphotyrosine mark. 2 positions are modified to phosphoserine: Ser184 and Ser187. One can recognise a UBA domain in the interval 193–234 (SRYSRQLAELKDMGFGDTNKNLDALSSAHGNINRAIDYLEKS). The segment covering 234–249 (SSSSRNSVSAAATTST) has biased composition (low complexity). The residue at position 240 (Ser240) is a Phosphoserine. Residue Thr249 is modified to Phosphothreonine.

The protein localises to the nucleus. Appears to modulate the timing of budding to obtain an appropriate cell size independent of the DNA replication cycle. Transcription factor involved in both heat resistance and flocculation. This Saccharomyces cerevisiae (strain ATCC 204508 / S288c) (Baker's yeast) protein is Protein GTS1 (GTS1).